The sequence spans 217 residues: D-methionine transport system permease protein MetI (217 aa).

Residues 13–204 (VWETLMMTFV…LLVILVYLIQ (192 aa)) enclose the ABC transmembrane type-1 domain. The next 5 membrane-spanning stretches (helical) occupy residues 20-40 (TFVS…LLYV), 58-78 (GVVN…MIPF), 81-101 (MIVG…VGAA), 152-172 (ITLI…AGGL), and 186-206 (ATVM…IQLS).

The protein belongs to the binding-protein-dependent transport system permease family. CysTW subfamily.

The protein resides in the cell inner membrane. Part of the binding-protein-dependent transport system for D-methionine and the toxic methionine analog alpha-methyl-methionine. Probably responsible for the translocation of the substrate across the membrane. This chain is D-methionine transport system permease protein MetI (metI), found in Yersinia pestis.